The primary structure comprises 3130 residues: DNA polymerase zeta catalytic subunit (3130 aa).

Disordered stretches follow at residues 263 to 295 (AIWEDEKQRRRNRNETSQMSQPESQDHRFVPAT), 425 to 457 (GYRGERNRMPSPCRSFGNNKYPQNSDDEENEPQ), 487 to 510 (LCRNTHRSSTEDDDSSSGEEMEWS), 524 to 548 (LDGTADENSDNPLNNENSRTHSSVI), 697 to 728 (PNENTLGKNSFNFSDLNHSKNKVSSEGNEKGN), and 817 to 871 (VTYK…EKDN). Over residues 286-295 (SQDHRFVPAT) the composition is skewed to basic and acidic residues. Over residues 497–509 (EDDDSSSGEEMEW) the composition is skewed to acidic residues. Polar residues-rich tracts occupy residues 533-548 (DNPLNNENSRTHSSVI) and 699-728 (ENTLGKNSFNFSDLNHSKNKVSSEGNEKGN). Residues 828 to 838 (SRLKLNKRKLA) are compositionally biased toward basic residues. The segment covering 842 to 854 (ETSTKSSETGSTK) has biased composition (low complexity). Over residues 855-866 (DNFIQNNPCNSN) the composition is skewed to polar residues. Residue S1030 is modified to Phosphoserine. Disordered stretches follow at residues 1035 to 1095 (YPIY…YNAE), 1162 to 1231 (SRIG…DEKI), and 1537 to 1600 (RQQK…KLLK). The residue at position 1041 (T1041) is a Phosphothreonine. 2 stretches are compositionally biased toward basic residues: residues 1043–1061 (KKSHRRKSKHKSAKKKTGK) and 1166–1179 (KTSRARAQIKKSKA). The span at 1213-1231 (KTNEKGTSRKHTTLKDEKI) shows a compositional bias: basic and acidic residues. Positions 1540 to 1565 (KAQNANTTQDPLSNKHQPNKNISGSL) are enriched in polar residues. Residues 1570–1589 (ANKRTRSVTSPRKPRTPRST) show a composition bias toward basic residues. Over residues 1590 to 1600 (KQKEKIPKLLK) the composition is skewed to basic and acidic residues. S1724 is subject to Phosphoserine. Disordered regions lie at residues 1845–1882 (NDMLTPTPDSSPRSTSSPSQSKNGSFTPRTANILKPLM), 1962–1984 (NPRPGSPLRSGQGVVNKGSSNSP), 2017–2050 (ERSKKLPKTKPTGVVKSAENFSSSVNPDDKPVVP), 2080–2150 (PTTG…SPVE), and 2216–2236 (APGLSPLSTEPKTQKLSNKKG). Residues 1847 to 1898 (MLTPTPDSSPRSTSSPSQSKNGSFTPRTANILKPLMSPPSREEIMATLLDHD) are mediates interaction with MAD2L2. Positions 1849 to 1865 (TPTPDSSPRSTSSPSQS) are enriched in low complexity. S1967 carries the post-translational modification Phosphoserine. Positions 2080 to 2092 (PTTGCSQTASESQ) are enriched in polar residues. The segment covering 2113–2122 (YYISYSSPDS) has biased composition (low complexity). Positions 2221–2236 (PLSTEPKTQKLSNKKG) are enriched in polar residues. Positions 3042, 3045, 3054, and 3057 each coordinate Zn(2+). The CysA-type zinc-finger motif lies at 3042–3057 (CPVCDDLTQHGICSKC). The [4Fe-4S] cluster site is built by C3086, C3089, C3099, and C3104. Positions 3086 to 3104 (CKNCTGCFDRHIPCVSLNC) match the CysB motif motif.

It belongs to the DNA polymerase type-B family. As to quaternary structure, heterodimer with MAD2L2. This dimer forms the minimal DNA polymerase zeta complex (Pol-zeta2), with REV3L bearing DNA polymerase catalytic activity, although its activity is very low in this context. Component of the tetrameric Pol-zeta complex (Pol-zeta4), which consists of REV3L, MAD2L2, POLD2 and POLD3; Pol-zeta4 is the fully active form of DNA polymerase zeta. [4Fe-4S] cluster serves as cofactor. Ubiquitously expressed.

The protein resides in the nucleus. The enzyme catalyses DNA(n) + a 2'-deoxyribonucleoside 5'-triphosphate = DNA(n+1) + diphosphate. In terms of biological role, catalytic subunit of the DNA polymerase zeta complex, an error-prone polymerase specialized in translesion DNA synthesis (TLS). Lacks an intrinsic 3'-5' exonuclease activity and thus has no proofreading function. The chain is DNA polymerase zeta catalytic subunit (REV3L) from Homo sapiens (Human).